We begin with the raw amino-acid sequence, 92 residues long: Large ribosomal subunit protein eL31 (92 aa).

This sequence belongs to the eukaryotic ribosomal protein eL31 family.

The sequence is that of Large ribosomal subunit protein eL31 from Halorubrum lacusprofundi (strain ATCC 49239 / DSM 5036 / JCM 8891 / ACAM 34).